The chain runs to 388 residues: Chaperone protein DnaJ (388 aa).

A J domain is found at 6 to 71; that stretch reads DYYEILGVPR…EKRKLYDQFG (66 aa). The segment at 147–229 adopts a CR-type zinc-finger fold; it reads GCEKEIPIYR…CGGTGNVRRQ (83 aa). Cysteine 160, cysteine 163, cysteine 177, cysteine 180, cysteine 203, cysteine 206, cysteine 217, and cysteine 220 together coordinate Zn(2+). CXXCXGXG motif repeat units lie at residues 160 to 167, 177 to 184, 203 to 210, and 217 to 224; these read CSVCGGSG, CQKCGGTG, CDACGGTG, and CRECGGTG.

Belongs to the DnaJ family. In terms of assembly, homodimer. Zn(2+) is required as a cofactor.

It localises to the cytoplasm. Its function is as follows. Participates actively in the response to hyperosmotic and heat shock by preventing the aggregation of stress-denatured proteins and by disaggregating proteins, also in an autonomous, DnaK-independent fashion. Unfolded proteins bind initially to DnaJ; upon interaction with the DnaJ-bound protein, DnaK hydrolyzes its bound ATP, resulting in the formation of a stable complex. GrpE releases ADP from DnaK; ATP binding to DnaK triggers the release of the substrate protein, thus completing the reaction cycle. Several rounds of ATP-dependent interactions between DnaJ, DnaK and GrpE are required for fully efficient folding. Also involved, together with DnaK and GrpE, in the DNA replication of plasmids through activation of initiation proteins. This is Chaperone protein DnaJ from Caldicellulosiruptor bescii (strain ATCC BAA-1888 / DSM 6725 / KCTC 15123 / Z-1320) (Anaerocellum thermophilum).